Reading from the N-terminus, the 228-residue chain is Sugar fermentation stimulation protein homolog (228 aa).

Belongs to the SfsA family.

The protein is Sugar fermentation stimulation protein homolog of Desulfitobacterium hafniense (strain DSM 10664 / DCB-2).